A 273-amino-acid polypeptide reads, in one-letter code: SUMO-1 cysteine protease S273R (273 aa).

Catalysis depends on residues H168 and N187. Substrate is bound at residue Q226. The Nucleophile role is filled by C232.

It belongs to the peptidase C63 family.

The protein localises to the host cytoplasm. Its subcellular location is the virion. Cysteine protease that plays several role during infection including processing of the structural polyprotein or inhibition of the host immune response. Catalyzes the maturation of the pp220 and pp62 polyprotein precursors into core-shell proteins. Plays a role in the disruption of host pyroptosis via specific cleavage of gasdermin D/GSDMD. In addition, strongly decreases the host cGAS-STING signaling by targeting IKBKE via its enzymatic activity. Also impairs host FOXJ1-mediated antiviral effect via degradation of FOXJ1. The sequence is that of SUMO-1 cysteine protease S273R from Ornithodoros (relapsing fever ticks).